The chain runs to 245 residues: Balbiani ring A 28 kDa protein (245 aa).

The signal sequence occupies residues 1–16; it reads MKSIIKHILFVVLLIS. 5 positions are modified to phosphoserine: Ser-33, Ser-40, Ser-92, Ser-93, and Ser-115.

Salivary gland.

The protein localises to the secreted. Used by the larvae to construct a supramolecular structure, the larval tube. The polypeptide is Balbiani ring A 28 kDa protein (Chironomus thummi thummi (Midge)).